The primary structure comprises 796 residues: MESSNDFSNKDSDTVSLSPVEFSNYQCEINPGFHEFLKKSGFEDVGFRFNVVTILGSQSSGKSHLLNSLFNASFQTMDASRGHSQTTKGIWGSLVLPKDTSVSATVVFDSEGTDSRERGEGRLTFEHRSSLFCLALSDVVIVNLWYNSMGNLTGSNYGLLKTVVEANLELVDTNNEENYKTVLFFCVRDWSPSLSPLNVVKDYVLNNYMRSIWNEISKPARFENMGVESLFEIRVFGLSNAVTQPELFEKDVKEVKKTWESLKPKEYSRRVPSDGFFVYSKNVWKTIIEQNHLDIPTQKEMLSSYRCSEIKTAILESATTSVPELTETDFSEYLMSLLNKVESEYFSQASRYDPKVSEKVGKELLSQLCGKFQPCFESALAGYVKKLAVESSSLLDKEFTVNSSGKELKVANARPYTVWPSFSKKCEELQSKQSEKLSEHLSRFKVSFNKTVSFEYEFDAQPLKDHLNLLVSTEFEVLRSRHLGLLKQQLDSMCNSTFVMVKNNLLDRSLTEDEFWDYFDELFDETHKNCMDQLTTSYQGLVNRASKAEFAQLSLVLLLKAARHNFDELQNNLEQLLLERFDKFFNYQEFKGELVPTEWHKQSAQELNNRYKESKEDALTLLKVLKKTKTKKMPSFDLNDVKKNQYFYSTLGEPVSDKYSTPVTEQFALEVTNSCSKKFLEMYKNAQVVQNAGTSISSWRNIPPIFWLVLLVLGWNELRSVFKVLLRFYVVIPLLIVFYFTFSYSATKLLGPKADQYVKPVRDKVLSLFTALLAWFVRTLHMIASKSSSFKQRPAT.

Over 1–701 the chain is Cytoplasmic; sequence MESSNDFSNK…AGTSISSWRN (701 aa). Positions 46-280 constitute a GB1/RHD3-type G domain; sequence GFRFNVVTIL…VPSDGFFVYS (235 aa). 56-63 contributes to the GTP binding site; the sequence is GSQSSGKS. The stretch at 554 to 626 forms a coiled coil; that stretch reads SLVLLLKAAR…DALTLLKVLK (73 aa). Residues 702 to 722 traverse the membrane as a helical segment; sequence IPPIFWLVLLVLGWNELRSVF. Residues 723–725 lie on the Lumenal side of the membrane; the sequence is KVL. Residues 726 to 746 traverse the membrane as a helical segment; the sequence is LRFYVVIPLLIVFYFTFSYSA. Over 747–796 the chain is Cytoplasmic; that stretch reads TKLLGPKADQYVKPVRDKVLSLFTALLAWFVRTLHMIASKSSSFKQRPAT.

It belongs to the TRAFAC class dynamin-like GTPase superfamily. GB1/RHD3 GTPase family. RHD3 subfamily.

It is found in the endoplasmic reticulum membrane. In terms of biological role, probable GTP-binding protein that may be involved in cell development. The protein is Protein SEY1 homolog of Theileria parva (East coast fever infection agent).